The following is a 631-amino-acid chain: ATP-dependent RNA helicase mrh4, mitochondrial (631 aa).

The N-terminal 45 residues, 1–45, are a transit peptide targeting the mitochondrion; sequence MNRLGRLPLPLPPSVCLFCQSRATTPLPPSLQATRSMATARLRRR. The interval 68 to 111 is disordered; sequence KERFGPFAGMNQTEARIRDKPRTRSRAAQKRSGEPEEDSQKESP. Over residues 98 to 108 the composition is skewed to basic and acidic residues; sequence RSGEPEEDSQK. Positions 141-174 match the Q motif motif; it reads TSFDQFQLLPVVRNSISSQALPGLVDVTPTPIQR. The span at 180 to 193 shows a compositional bias: basic and acidic residues; it reads LLEEPKTEKKPTKA. The tract at residues 180-199 is disordered; the sequence is LLEEPKTEKKPTKADDDEPQ. Residues 194–406 enclose the Helicase ATP-binding domain; the sequence is DDDEPQYDQY…RKRYPDIKRL (213 aa). 207–214 is a binding site for ATP; the sequence is AETGSGKT. The interval 229 to 249 is disordered; that stretch reads EARDKELEKKEQEEKAREREE. A DEAD box motif is present at residues 353 to 356; sequence DEAD. The region spanning 455–631 is the Helicase C-terminal domain; sequence GPYASYVAPK…EGMFRGQALI (177 aa).

It belongs to the DEAD box helicase family. MRH4 subfamily.

It localises to the mitochondrion. The enzyme catalyses ATP + H2O = ADP + phosphate + H(+). Its function is as follows. ATP-binding RNA helicase involved in mitochondrial RNA metabolism. Required for maintenance of mitochondrial DNA. The sequence is that of ATP-dependent RNA helicase mrh4, mitochondrial (mrh4) from Neosartorya fischeri (strain ATCC 1020 / DSM 3700 / CBS 544.65 / FGSC A1164 / JCM 1740 / NRRL 181 / WB 181) (Aspergillus fischerianus).